The sequence spans 329 residues: GTP 3',8-cyclase (329 aa).

A Radical SAM core domain is found at 8–234 (AFARKFYYLR…QLRQRSDGPA (227 aa)). Residue R17 coordinates GTP. Positions 24 and 28 each coordinate [4Fe-4S] cluster. Y30 is a binding site for S-adenosyl-L-methionine. C31 provides a ligand contact to [4Fe-4S] cluster. R68 is a binding site for GTP. G72 provides a ligand contact to S-adenosyl-L-methionine. A GTP-binding site is contributed by T99. S123 is a binding site for S-adenosyl-L-methionine. GTP is bound at residue K160. S-adenosyl-L-methionine is bound at residue M194. C257 and C260 together coordinate [4Fe-4S] cluster. A GTP-binding site is contributed by 262–264 (RLR). C274 is a [4Fe-4S] cluster binding site.

The protein belongs to the radical SAM superfamily. MoaA family. In terms of assembly, monomer and homodimer. It depends on [4Fe-4S] cluster as a cofactor.

The enzyme catalyses GTP + AH2 + S-adenosyl-L-methionine = (8S)-3',8-cyclo-7,8-dihydroguanosine 5'-triphosphate + 5'-deoxyadenosine + L-methionine + A + H(+). It functions in the pathway cofactor biosynthesis; molybdopterin biosynthesis. Functionally, catalyzes the cyclization of GTP to (8S)-3',8-cyclo-7,8-dihydroguanosine 5'-triphosphate. This chain is GTP 3',8-cyclase, found in Escherichia coli O45:K1 (strain S88 / ExPEC).